Reading from the N-terminus, the 508-residue chain is Phytepsin (508 aa).

The signal sequence occupies residues 1–27; the sequence is MGTRGLALALLAAVLLLQTVLPAASEA. The propeptide at 28 to 66 is activation peptide; it reads EGLVRIALKKRPIDRNSRVATGLSGGEEQPLLSGANPLR. The Peptidase A1 domain maps to 84–505; the sequence is YFGEIGVGTP…DYGKLRIGFA (422 aa). Aspartate 102 is an active-site residue. Cystine bridges form between cysteine 115/cysteine 121 and cysteine 280/cysteine 284. The active site involves aspartate 289. The Saposin B-type domain maps to 314–419; sequence VVSQECKTIV…NQLCNRLPSP (106 aa). 4 cysteine pairs are disulfide-bonded: cysteine 319–cysteine 413, cysteine 344–cysteine 385, cysteine 350–cysteine 382, and cysteine 427–cysteine 464. Asparagine 399 is a glycosylation site (N-linked (GlcNAc...) asparagine).

The protein belongs to the peptidase A1 family. In terms of assembly, heterodimer of two subunits (29 kDa and 11 kDa) processed from the precursor molecule. A large enzyme (32 kDa and 16 kDa) is an intermediate precursor form. Embryo and leaf.

The protein localises to the vacuole. The catalysed reaction is Prefers hydrophobic residues Phe, Val, Ile, Leu, and Ala at P1 and P1', but also cleaves -Phe-|-Asp- and -Asp-|-Asp- bonds in 2S albumin from plant seeds.. Its function is as follows. Involved in the breakdown of propeptides of storage proteins in protein-storage vacuoles. This Hordeum vulgare (Barley) protein is Phytepsin.